We begin with the raw amino-acid sequence, 150 residues long: MQVILLDKVANLGGLGEQVNVKAGYARNYLVPQGKAVPATKKNVEYFEERRAELEAKLAETQAAAEARAAKINELGIVTIPSKAGDEGKLFGSIGTRDIADAITAAGINVSKSEVRLPNGVLRTTGDHDVSIQVHSEVFASLNVVIVPEA.

Belongs to the bacterial ribosomal protein bL9 family.

In terms of biological role, binds to the 23S rRNA. This is Large ribosomal subunit protein bL9 from Sodalis glossinidius (strain morsitans).